Here is a 237-residue protein sequence, read N- to C-terminus: Phosphoadenosine 5'-phosphosulfate reductase (237 aa).

The Nucleophile; cysteine thiosulfonate intermediate role is filled by Cys231.

The protein belongs to the PAPS reductase family. CysH subfamily.

It is found in the cytoplasm. The catalysed reaction is [thioredoxin]-disulfide + sulfite + adenosine 3',5'-bisphosphate + 2 H(+) = [thioredoxin]-dithiol + 3'-phosphoadenylyl sulfate. Its pathway is sulfur metabolism; hydrogen sulfide biosynthesis; sulfite from sulfate: step 3/3. In terms of biological role, catalyzes the formation of sulfite from phosphoadenosine 5'-phosphosulfate (PAPS) using thioredoxin as an electron donor. The protein is Phosphoadenosine 5'-phosphosulfate reductase of Xylella fastidiosa (strain M23).